The following is a 109-amino-acid chain: Parvalbumin beta-1 (109 aa).

Ser-2 carries the post-translational modification N-acetylserine. 2 EF-hand domains span residues Lys-39–Gly-74 and Leu-78–Ala-109. Residues Asp-52, Asp-54, Ser-56, Phe-58, Glu-60, Glu-63, Asp-91, Asp-93, Asp-95, Met-97, and Glu-102 each contribute to the Ca(2+) site.

Belongs to the parvalbumin family.

Functionally, in muscle, parvalbumin is thought to be involved in relaxation after contraction. It binds two calcium ions. This chain is Parvalbumin beta-1, found in Gadus chalcogrammus (Alaska pollock).